We begin with the raw amino-acid sequence, 323 residues long: Aldo-keto reductase family 1 member C23-like protein (323 aa).

20–24 (GFGTY) is a binding site for NADP(+). Lys31 lines the substrate pocket. Asp50 provides a ligand contact to NADP(+). Tyr55 (proton donor) is an active-site residue. His117 provides a ligand contact to substrate. Residues 166-167 (SN), Gln190, 216-222 (YGALGTQ), and 270-280 (KSYNEKRIKEN) each bind NADP(+).

This sequence belongs to the aldo/keto reductase family. As to quaternary structure, monomer. As to expression, detected in endometrium surface epithelium (at protein level). Detected in endometrium.

The protein resides in the cytoplasm. Its function is as follows. NADP-dependent oxidoreductase involved in steroid metabolism. May act on various hydroxysteroids. The sequence is that of Aldo-keto reductase family 1 member C23-like protein (PGFS) from Equus caballus (Horse).